Consider the following 233-residue polypeptide: Adapter protein MecA (233 aa).

This sequence belongs to the MecA family. Homodimer.

Enables the recognition and targeting of unfolded and aggregated proteins to the ClpC protease or to other proteins involved in proteolysis. This Lactococcus lactis subsp. lactis (strain IL1403) (Streptococcus lactis) protein is Adapter protein MecA.